The chain runs to 225 residues: Ribonuclease 3 (225 aa).

Residues Phe4 to Asn133 enclose the RNase III domain. Glu46 provides a ligand contact to Mg(2+). Asp50 is a catalytic residue. Asn119 and Glu122 together coordinate Mg(2+). The active site involves Glu122. Residues Asp158 to Lys225 enclose the DRBM domain.

It belongs to the ribonuclease III family. In terms of assembly, homodimer. Mg(2+) serves as cofactor.

The protein localises to the cytoplasm. The enzyme catalyses Endonucleolytic cleavage to 5'-phosphomonoester.. Digests double-stranded RNA. Involved in the processing of primary rRNA transcript to yield the immediate precursors to the large and small rRNAs (23S and 16S). Processes some mRNAs, and tRNAs when they are encoded in the rRNA operon. Processes pre-crRNA and tracrRNA of type II CRISPR loci if present in the organism. The chain is Ribonuclease 3 from Rickettsia felis (strain ATCC VR-1525 / URRWXCal2) (Rickettsia azadi).